The chain runs to 389 residues: Phospho-N-acetylmuramoyl-pentapeptide-transferase (389 aa).

10 helical membrane passes run 25–45, 73–93, 97–117, 135–155, 190–210, 222–242, 258–278, 286–306, 311–331, and 366–386; these read RAVM…PWVI, TMGG…WGDL, FIWI…VDDY, FWQS…VSEA, ISYP…IVGA, GLVI…AYVM, GAGE…AFLW, VFMG…VAVI, IVLF…MLQV, and QVVV…LSTL.

Belongs to the glycosyltransferase 4 family. MraY subfamily. It depends on Mg(2+) as a cofactor.

Its subcellular location is the cell inner membrane. The catalysed reaction is UDP-N-acetyl-alpha-D-muramoyl-L-alanyl-gamma-D-glutamyl-meso-2,6-diaminopimeloyl-D-alanyl-D-alanine + di-trans,octa-cis-undecaprenyl phosphate = di-trans,octa-cis-undecaprenyl diphospho-N-acetyl-alpha-D-muramoyl-L-alanyl-D-glutamyl-meso-2,6-diaminopimeloyl-D-alanyl-D-alanine + UMP. It functions in the pathway cell wall biogenesis; peptidoglycan biosynthesis. In terms of biological role, catalyzes the initial step of the lipid cycle reactions in the biosynthesis of the cell wall peptidoglycan: transfers peptidoglycan precursor phospho-MurNAc-pentapeptide from UDP-MurNAc-pentapeptide onto the lipid carrier undecaprenyl phosphate, yielding undecaprenyl-pyrophosphoryl-MurNAc-pentapeptide, known as lipid I. This Burkholderia multivorans (strain ATCC 17616 / 249) protein is Phospho-N-acetylmuramoyl-pentapeptide-transferase.